Consider the following 785-residue polypeptide: B-cell scaffold protein with ankyrin repeats (785 aa).

Positions 1–154 (MLPAAPGKGL…DYISVIQSII (154 aa)) are interaction with ITPR2. Positions 25–153 (NTKDIIMIYE…EDYISVIQSI (129 aa)) constitute a TIR domain. One can recognise a DBB domain in the interval 200 to 327 (VLPTEIPCEN…EIPYYEFQSL (128 aa)). ANK repeat units follow at residues 342-371 (ELPT…ATWA) and 378-408 (EGSD…EIDI). 4 disordered regions span residues 433-480 (PAFH…SESS), 493-514 (GADP…LPPP), 538-578 (QMER…EDPY), and 606-625 (FIIN…PPKE). Residues 553 to 568 (ETGDEPKGEKEKKEEE) are compositionally biased toward basic and acidic residues. Residues 569 to 578 (KEQEEEEDPY) show a composition bias toward acidic residues. Residues 611 to 621 (PPAPTPRPTSI) are compositionally biased toward pro residues.

As to quaternary structure, interacts with LYN, ITPR1 and ITPR2. Phosphorylated on tyrosines upon BCR activation. In terms of tissue distribution, expressed in B-cell but not T-cell or myeloid cell lines. Highest expression in CD19(+) B-cells, with very low expression in other cell populations.

Functionally, involved in B-cell receptor (BCR)-induced Ca(2+) mobilization from intracellular stores. Promotes Lyn-mediated phosphorylation of IP3 receptors 1 and 2. The protein is B-cell scaffold protein with ankyrin repeats (BANK1) of Homo sapiens (Human).